We begin with the raw amino-acid sequence, 931 residues long: Envelope glycoprotein B (931 aa).

The N-terminal stretch at 1–71 (MSPCGYYSKW…FSMFVTAVVS (71 aa)) is a signal peptide. Residues 72-786 (VSPSSFYESL…HGFTTFLSNP (715 aa)) are Virion surface-facing. Disulfide bonds link cysteine 122–cysteine 584, cysteine 139–cysteine 540, cysteine 213–cysteine 277, cysteine 369–cysteine 417, and cysteine 608–cysteine 645. N-linked (GlcNAc...) asparagine; by host glycosylation occurs at asparagine 147. The tract at residues 179 to 185 (AWAGSSY) is involved in fusion and/or binding to host membrane. A glycan (N-linked (GlcNAc...) asparagine; by host) is linked at asparagine 257. Residues 264-271 (GTPGTYRT) form an involved in fusion and/or binding to host membrane region. 4 N-linked (GlcNAc...) asparagine; by host glycosylation sites follow: asparagine 435, asparagine 503, asparagine 620, and asparagine 686. Hydrophobic membrane proximal region regions lie at residues 731 to 784 (IDKV…TFLS) and 764 to 784 (VVLGATGALLSTVHGFTTFLS). A helical transmembrane segment spans residues 787-807 (FGALAVGLLVLAGLVAAFFAY). Residues 808-931 (RYVLKLKTSP…RVRTENVTGV (124 aa)) are Intravirion-facing. Positions 881-884 (YMTL) match the Golgi targeting motif. The short motif at 920–923 (YSRV) is the Internalization motif element.

This sequence belongs to the herpesviridae glycoprotein B family. As to quaternary structure, homotrimer; disulfide-linked. Binds to heparan sulfate proteoglycans. Interacts with gH/gL heterodimer. A proteolytic cleavage by host furin generates two subunits that remain linked by disulfide bonds.

The protein resides in the virion membrane. It is found in the host cell membrane. It localises to the host endosome membrane. The protein localises to the host Golgi apparatus membrane. Envelope glycoprotein that forms spikes at the surface of virion envelope. Essential for the initial attachment to heparan sulfate moieties of the host cell surface proteoglycans. Involved in fusion of viral and cellular membranes leading to virus entry into the host cell. Following initial binding to its host receptors, membrane fusion is mediated by the fusion machinery composed at least of gB and the heterodimer gH/gL. May be involved in the fusion between the virion envelope and the outer nuclear membrane during virion egress. This chain is Envelope glycoprotein B, found in Varicella-zoster virus (strain Oka vaccine) (HHV-3).